We begin with the raw amino-acid sequence, 164 residues long: S-ribosylhomocysteine lyase (164 aa).

Positions 54, 58, and 128 each coordinate Fe cation.

Belongs to the LuxS family. In terms of assembly, homodimer. The cofactor is Fe cation.

The catalysed reaction is S-(5-deoxy-D-ribos-5-yl)-L-homocysteine = (S)-4,5-dihydroxypentane-2,3-dione + L-homocysteine. Functionally, involved in the synthesis of autoinducer 2 (AI-2) which is secreted by bacteria and is used to communicate both the cell density and the metabolic potential of the environment. The regulation of gene expression in response to changes in cell density is called quorum sensing. Catalyzes the transformation of S-ribosylhomocysteine (RHC) to homocysteine (HC) and 4,5-dihydroxy-2,3-pentadione (DPD). This Campylobacter hominis (strain ATCC BAA-381 / DSM 21671 / CCUG 45161 / LMG 19568 / NCTC 13146 / CH001A) protein is S-ribosylhomocysteine lyase.